We begin with the raw amino-acid sequence, 223 residues long: Ribose-5-phosphate isomerase A (223 aa).

Substrate contacts are provided by residues 32 to 35 (TGST), 83 to 86 (DGAD), and 96 to 99 (KGGG). The active-site Proton acceptor is the E105. K123 contacts substrate.

Belongs to the ribose 5-phosphate isomerase family. As to quaternary structure, homodimer.

It carries out the reaction aldehydo-D-ribose 5-phosphate = D-ribulose 5-phosphate. It functions in the pathway carbohydrate degradation; pentose phosphate pathway; D-ribose 5-phosphate from D-ribulose 5-phosphate (non-oxidative stage): step 1/1. Its function is as follows. Catalyzes the reversible conversion of ribose-5-phosphate to ribulose 5-phosphate. The protein is Ribose-5-phosphate isomerase A of Acinetobacter baumannii (strain ATCC 17978 / DSM 105126 / CIP 53.77 / LMG 1025 / NCDC KC755 / 5377).